A 232-amino-acid polypeptide reads, in one-letter code: Large ribosomal subunit protein uL1 (232 aa).

The protein belongs to the universal ribosomal protein uL1 family. Part of the 50S ribosomal subunit.

In terms of biological role, binds directly to 23S rRNA. The L1 stalk is quite mobile in the ribosome, and is involved in E site tRNA release. Protein L1 is also a translational repressor protein, it controls the translation of the L11 operon by binding to its mRNA. The sequence is that of Large ribosomal subunit protein uL1 from Sinorhizobium medicae (strain WSM419) (Ensifer medicae).